A 192-amino-acid polypeptide reads, in one-letter code: Erythropoietin (192 aa).

Residues 1-26 (MGVPERPTLLLLLSLLLIPLGLPVLC) form the signal peptide. Cysteines 33 and 187 form a disulfide. N-linked (GlcNAc...) asparagine glycosylation is found at Asn50, Asn64, and Asn109.

This sequence belongs to the EPO/TPO family. As to expression, produced by kidney or liver of adult mammals and by liver of fetal or neonatal mammals.

Its subcellular location is the secreted. Functionally, hormone involved in the regulation of erythrocyte proliferation and differentiation and the maintenance of a physiological level of circulating erythrocyte mass. Binds to EPOR leading to EPOR dimerization and JAK2 activation thereby activating specific downstream effectors, including STAT1 and STAT3. The polypeptide is Erythropoietin (Epo) (Rattus norvegicus (Rat)).